Consider the following 264-residue polypeptide: uncharacterized protein (264 aa).

The N-terminal stretch at 1–22 (MGYLKKLALFISVIILGIFIIG) is a signal peptide. C23 carries N-palmitoyl cysteine lipidation. C23 is lipidated: S-diacylglycerol cysteine.

Belongs to the staphylococcal tandem lipoprotein family.

The protein localises to the cell membrane. This is an uncharacterized protein from Staphylococcus aureus (strain N315).